Consider the following 415-residue polypeptide: Imidazolonepropionase (415 aa).

Residues histidine 76 and histidine 78 each coordinate Fe(3+). Positions 76 and 78 each coordinate Zn(2+). Residues arginine 85, tyrosine 148, and histidine 181 each coordinate 4-imidazolone-5-propanoate. Position 148 (tyrosine 148) interacts with N-formimidoyl-L-glutamate. A Fe(3+)-binding site is contributed by histidine 246. Histidine 246 lines the Zn(2+) pocket. Glutamate 249 lines the 4-imidazolone-5-propanoate pocket. Fe(3+) is bound at residue aspartate 320. Aspartate 320 contacts Zn(2+). N-formimidoyl-L-glutamate is bound by residues asparagine 322 and glycine 324. Threonine 325 contributes to the 4-imidazolone-5-propanoate binding site.

Belongs to the metallo-dependent hydrolases superfamily. HutI family. Zn(2+) serves as cofactor. Fe(3+) is required as a cofactor.

It is found in the cytoplasm. The catalysed reaction is 4-imidazolone-5-propanoate + H2O = N-formimidoyl-L-glutamate. The protein operates within amino-acid degradation; L-histidine degradation into L-glutamate; N-formimidoyl-L-glutamate from L-histidine: step 3/3. Catalyzes the hydrolytic cleavage of the carbon-nitrogen bond in imidazolone-5-propanoate to yield N-formimidoyl-L-glutamate. It is the third step in the universal histidine degradation pathway. The polypeptide is Imidazolonepropionase (Thermoanaerobacter pseudethanolicus (strain ATCC 33223 / 39E) (Clostridium thermohydrosulfuricum)).